The chain runs to 426 residues: Serine hydroxymethyltransferase (426 aa).

(6S)-5,6,7,8-tetrahydrofolate-binding positions include leucine 113 and glycine 117 to leucine 119. Lysine 222 bears the N6-(pyridoxal phosphate)lysine mark. Residue serine 363–phenylalanine 365 coordinates (6S)-5,6,7,8-tetrahydrofolate.

It belongs to the SHMT family. As to quaternary structure, homodimer. It depends on pyridoxal 5'-phosphate as a cofactor.

Its subcellular location is the cytoplasm. It catalyses the reaction (6R)-5,10-methylene-5,6,7,8-tetrahydrofolate + glycine + H2O = (6S)-5,6,7,8-tetrahydrofolate + L-serine. The protein operates within one-carbon metabolism; tetrahydrofolate interconversion. It functions in the pathway amino-acid biosynthesis; glycine biosynthesis; glycine from L-serine: step 1/1. Catalyzes the reversible interconversion of serine and glycine with tetrahydrofolate (THF) serving as the one-carbon carrier. This reaction serves as the major source of one-carbon groups required for the biosynthesis of purines, thymidylate, methionine, and other important biomolecules. Also exhibits THF-independent aldolase activity toward beta-hydroxyamino acids, producing glycine and aldehydes, via a retro-aldol mechanism. This is Serine hydroxymethyltransferase from Bacteroides fragilis (strain ATCC 25285 / DSM 2151 / CCUG 4856 / JCM 11019 / LMG 10263 / NCTC 9343 / Onslow / VPI 2553 / EN-2).